The primary structure comprises 586 residues: Ezrin (586 aa).

One can recognise an FERM domain in the interval P2–R295. An N6-acetyllysine modification is found at K60. Positions I115–E120 match the [IL]-x-C-x-x-[DE] motif motif. Y146 is subject to Phosphotyrosine; by PDGFR. The tract at residues E244–M586 is interaction with SCYL3. Residues V302–E462 are a coiled coil. The tract at residues M305–M340 is disordered. The segment covering Q308–M340 has biased composition (basic and acidic residues). Y354 carries the phosphotyrosine; by PDGFR modification. Phosphoserine is present on S366. Y478 is modified (phosphotyrosine). At S535 the chain carries Phosphoserine. T567 carries the phosphothreonine; by ROCK2 and PKC/PRKCI modification.

Interacts with PALS1. Found in a complex with EZR, PODXL and NHERF2. Interacts with MCC, PLEKHG6, PODXL, SCYL3/PACE1, NHERF1, NHERF2 and TMEM8B. Interacts (when phosphorylated) with FES/FPS. Interacts with dimeric S100P, the interaction may be activating through unmasking of F-actin binding sites. Identified in complexes that contain VIM, EZR, AHNAK, BFSP1, BFSP2, ANK2, PLEC, PRX and spectrin. Detected in a complex composed of at least EZR, AHNAK, PPL and PRX. Interacts with PDPN (via cytoplasmic domain); activates RHOA and promotes epithelial-mesenchymal transition. Interacts with SPN/CD43 cytoplasmic tail, CD44 and ICAM2. Interacts with SLC9A3; interaction targets SLC9A3 to the apical membrane. Interacts with SLC9A1; regulates interactions of SLC9A1 with cytoskeletal and promotes stress fiber formation. Interacts with CLIC5; may work together in a complex which also includes RDX and MYO6 to stabilize linkages between the plasma membrane and subjacent actin cytoskeleton at the base of stereocilia. Phosphorylated by tyrosine-protein kinases. Phosphorylation by ROCK2 suppresses the head-to-tail association of the N-terminal and C-terminal halves resulting in an opened conformation which is capable of actin and membrane-binding. Post-translationally, S-nitrosylation is induced by interferon-gamma and oxidatively-modified low-densitity lipoprotein (LDL(ox)) possibly implicating the iNOS-S100A8/9 transnitrosylase complex.

The protein resides in the apical cell membrane. The protein localises to the cell projection. It localises to the microvillus membrane. It is found in the ruffle membrane. Its subcellular location is the cytoplasm. The protein resides in the cell cortex. The protein localises to the cytoskeleton. It localises to the microvillus. A head-to-tail association, of the N-terminal and C-terminal halves results in a closed conformation (inactive form) which is incapable of actin or membrane-binding. Probably involved in connections of major cytoskeletal structures to the plasma membrane. In epithelial cells, required for the formation of microvilli and membrane ruffles on the apical pole. Along with PLEKHG6, required for normal macropinocytosis. In Oryctolagus cuniculus (Rabbit), this protein is Ezrin (EZR).